Consider the following 218-residue polypeptide: Thiopurine S-methyltransferase (218 aa).

S-adenosyl-L-methionine contacts are provided by Trp-10, Leu-45, Glu-66, and Arg-123.

The protein belongs to the class I-like SAM-binding methyltransferase superfamily. TPMT family.

The protein resides in the cytoplasm. The catalysed reaction is S-adenosyl-L-methionine + a thiopurine = S-adenosyl-L-homocysteine + a thiopurine S-methylether.. The polypeptide is Thiopurine S-methyltransferase (Shewanella baltica (strain OS195)).